The following is a 192-amino-acid chain: dITP/XTP pyrophosphatase (192 aa).

12–17 provides a ligand contact to substrate; it reads TNNENK. The Mg(2+) site is built by glutamate 41 and aspartate 70. The Proton acceptor role is filled by aspartate 70. Residues serine 71, 145-148, lysine 168, and 173-174 contribute to the substrate site; these read FGFD and HR.

This sequence belongs to the HAM1 NTPase family. As to quaternary structure, homodimer. Requires Mg(2+) as cofactor.

It carries out the reaction XTP + H2O = XMP + diphosphate + H(+). The enzyme catalyses dITP + H2O = dIMP + diphosphate + H(+). It catalyses the reaction ITP + H2O = IMP + diphosphate + H(+). Functionally, pyrophosphatase that catalyzes the hydrolysis of nucleoside triphosphates to their monophosphate derivatives, with a high preference for the non-canonical purine nucleotides XTP (xanthosine triphosphate), dITP (deoxyinosine triphosphate) and ITP. Seems to function as a house-cleaning enzyme that removes non-canonical purine nucleotides from the nucleotide pool, thus preventing their incorporation into DNA/RNA and avoiding chromosomal lesions. The protein is dITP/XTP pyrophosphatase of Saccharolobus solfataricus (strain ATCC 35092 / DSM 1617 / JCM 11322 / P2) (Sulfolobus solfataricus).